Consider the following 386-residue polypeptide: Succinate--CoA ligase [ADP-forming] subunit beta (386 aa).

The ATP-grasp domain maps to 9 to 244 (KEILRKYGVP…HDEEDPLETR (236 aa)). ATP-binding positions include lysine 46, 53–55 (GRG), glutamate 99, cysteine 102, and glutamate 107. 2 residues coordinate Mg(2+): asparagine 199 and aspartate 213. Substrate contacts are provided by residues asparagine 264 and 321–323 (GIM).

It belongs to the succinate/malate CoA ligase beta subunit family. In terms of assembly, heterotetramer of two alpha and two beta subunits. Mg(2+) is required as a cofactor.

The catalysed reaction is succinate + ATP + CoA = succinyl-CoA + ADP + phosphate. The enzyme catalyses GTP + succinate + CoA = succinyl-CoA + GDP + phosphate. The protein operates within carbohydrate metabolism; tricarboxylic acid cycle; succinate from succinyl-CoA (ligase route): step 1/1. Functionally, succinyl-CoA synthetase functions in the citric acid cycle (TCA), coupling the hydrolysis of succinyl-CoA to the synthesis of either ATP or GTP and thus represents the only step of substrate-level phosphorylation in the TCA. The beta subunit provides nucleotide specificity of the enzyme and binds the substrate succinate, while the binding sites for coenzyme A and phosphate are found in the alpha subunit. The sequence is that of Succinate--CoA ligase [ADP-forming] subunit beta from Rickettsia felis (strain ATCC VR-1525 / URRWXCal2) (Rickettsia azadi).